The sequence spans 109 residues: Protein reprimo (109 aa).

2 N-linked (GlcNAc...) asparagine glycosylation sites follow: N7 and N18. The chain crosses the membrane as a helical span at residues 56-76; it reads VVQIAVMCVLSLTVVFGIFFL. Position 98 is a phosphoserine (S98).

Belongs to the reprimo family.

Its subcellular location is the cytoplasm. It is found in the membrane. Functionally, may be involved in the regulation of p53-dependent G2 arrest of the cell cycle. Seems to induce cell cycle arrest by inhibiting CDK1 activity and nuclear translocation of the CDC2 cyclin B1 complex. This is Protein reprimo (Rprm) from Rattus norvegicus (Rat).